Reading from the N-terminus, the 229-residue chain is 3-isopropylmalate dehydratase small subunit (229 aa).

The tract at residues 198–229 (LPVKREPEQPIESAREGEYPDWQGPLADRGII) is disordered. Basic and acidic residues predominate over residues 200–215 (VKREPEQPIESAREGE).

Belongs to the LeuD family. LeuD type 1 subfamily. In terms of assembly, heterodimer of LeuC and LeuD.

The enzyme catalyses (2R,3S)-3-isopropylmalate = (2S)-2-isopropylmalate. The protein operates within amino-acid biosynthesis; L-leucine biosynthesis; L-leucine from 3-methyl-2-oxobutanoate: step 2/4. In terms of biological role, catalyzes the isomerization between 2-isopropylmalate and 3-isopropylmalate, via the formation of 2-isopropylmaleate. This is 3-isopropylmalate dehydratase small subunit from Bifidobacterium adolescentis (strain ATCC 15703 / DSM 20083 / NCTC 11814 / E194a).